Reading from the N-terminus, the 197-residue chain is Glycerol-3-phosphate acyltransferase (197 aa).

5 helical membrane-spanning segments follow: residues 7 to 27 (PSIAALIGYAFGSIPFGLLLT), 56 to 76 (LAALTLVLDLVKGFVPVWIAW), 82 to 102 (DIGWAALGAVVGHCFPIWLGF), 116 to 136 (FGLGWGIGLAYAFVWLVMLAI), and 157 to 177 (YFGRPTFVPPLVIIAVIIIWL).

It belongs to the PlsY family. As to quaternary structure, probably interacts with PlsX.

Its subcellular location is the cell inner membrane. The catalysed reaction is an acyl phosphate + sn-glycerol 3-phosphate = a 1-acyl-sn-glycero-3-phosphate + phosphate. Its pathway is lipid metabolism; phospholipid metabolism. Functionally, catalyzes the transfer of an acyl group from acyl-phosphate (acyl-PO(4)) to glycerol-3-phosphate (G3P) to form lysophosphatidic acid (LPA). This enzyme utilizes acyl-phosphate as fatty acyl donor, but not acyl-CoA or acyl-ACP. The polypeptide is Glycerol-3-phosphate acyltransferase (Erythrobacter litoralis (strain HTCC2594)).